The following is a 662-amino-acid chain: Protein Aster-C (662 aa).

Positions 1–33 are disordered; that stretch reads MEGALTARQIVNEGDSSLATELQEEPEESPGPV. The GRAM domain occupies 70–176; that stretch reads EYRQQFTHLP…LIIFRLWQNV (107 aa). The disordered stretch occupies residues 212–294; sequence VEENVQPRSP…EKRISRAPSK (83 aa). Residues 240–250 show a composition bias toward polar residues; sequence VSFTQESVSRA. Over residues 265–276 the composition is skewed to basic and acidic residues; it reads LGKEDSQSERNV. One can recognise a VASt domain in the interval 326 to 497; it reads QGRLYINRVF…DLLMEESVLS (172 aa). The interval 506–530 is disordered; that stretch reads HSSLRRRRRTLNRTAEPVPKLSSQR. The segment covering 507 to 516 has biased composition (basic residues); sequence SSLRRRRRTL. The chain crosses the membrane as a helical span at residues 557-577; the sequence is LIVVMSIFLLLLVLLNVTLFL.

As to expression, highly expressed in the liver. Also found in the testis.

The protein localises to the endoplasmic reticulum membrane. It is found in the cell membrane. Functionally, cholesterol transporter that mediates non-vesicular transport of cholesterol from the plasma membrane (PM) to the endoplasmic reticulum (ER). Contains unique domains for binding cholesterol and the PM, thereby serving as a molecular bridge for the transfer of cholesterol from the PM to the ER. Plays a crucial role in cholesterol homeostasis and has the unique ability to localize to the PM based on the level of membrane cholesterol. In lipid-poor conditions localizes to the ER membrane and in response to excess cholesterol in the PM is recruited to the endoplasmic reticulum-plasma membrane contact sites (EPCS) which is mediated by the GRAM domain. At the EPCS, the sterol-binding VASt/ASTER domain binds to the cholesterol in the PM and facilitates its transfer from the PM to ER. This chain is Protein Aster-C (Gramd1c), found in Mus musculus (Mouse).